We begin with the raw amino-acid sequence, 704 residues long: Elongation factor G (704 aa).

Residues 8–290 (ARYRNIGISA…AVIDYLPSPV (283 aa)) form the tr-type G domain. GTP contacts are provided by residues 17–24 (AHIDAGKT), 88–92 (DTPGH), and 142–145 (NKMD).

This sequence belongs to the TRAFAC class translation factor GTPase superfamily. Classic translation factor GTPase family. EF-G/EF-2 subfamily.

It is found in the cytoplasm. In terms of biological role, catalyzes the GTP-dependent ribosomal translocation step during translation elongation. During this step, the ribosome changes from the pre-translocational (PRE) to the post-translocational (POST) state as the newly formed A-site-bound peptidyl-tRNA and P-site-bound deacylated tRNA move to the P and E sites, respectively. Catalyzes the coordinated movement of the two tRNA molecules, the mRNA and conformational changes in the ribosome. In Salmonella arizonae (strain ATCC BAA-731 / CDC346-86 / RSK2980), this protein is Elongation factor G.